Here is a 736-residue protein sequence, read N- to C-terminus: Sulfate transporter (736 aa).

Residues 1–28 (MSSESKEPHVLSPKDSFEGNDRYSPPSR) form a disordered region. A phosphoserine mark is found at serine 12 and serine 16. 2 helical membrane-spanning segments follow: residues 114–134 (VMSG…YSLL) and 139–159 (PIYG…LGTS). Asparagine 201 and asparagine 207 each carry an N-linked (GlcNAc...) asparagine glycan. Transmembrane regions (helical) follow at residues 229-249 (FLAG…VSVY), 257-277 (GFVT…LLGL), 380-400 (LIPS…AITV), 422-442 (AIGF…SAAL), 457-477 (LSGV…APLF), and 526-546 (LIST…CVIL). The region spanning 570-721 (AYKNLQARPG…YSVYEAMAFA (152 aa)) is the STAS domain.

The protein belongs to the SLC26A/SulP transporter (TC 2.A.53) family. N-glycosylated.

It localises to the cell membrane. It is found in the apical cell membrane. It catalyses the reaction oxalate(in) + sulfate(out) = oxalate(out) + sulfate(in). The enzyme catalyses sulfate(out) + 2 chloride(in) = sulfate(in) + 2 chloride(out). The catalysed reaction is oxalate(out) + 2 chloride(in) = oxalate(in) + 2 chloride(out). It carries out the reaction bromide(in) + chloride(out) = bromide(out) + chloride(in). It catalyses the reaction nitrate(in) + chloride(out) = nitrate(out) + chloride(in). The enzyme catalyses iodide(in) + chloride(out) = iodide(out) + chloride(in). Sulfate transporter which mediates sulfate uptake into chondrocytes in order to maintain adequate sulfation of proteoglycans which is needed for cartilage development. Mediates electroneutral anion exchange of sulfate ions for oxalate ions, sulfate and oxalate ions for chloride and/or hydroxyl ions and chloride ions for bromide, iodide and nitrate ions. The coupling of sulfate transport to both hydroxyl and chloride ions likely serves to ensure transport at both acidic pH when most sulfate uptake is mediated by sulfate-hydroxide exchange and alkaline pH when most sulfate uptake is mediated by sulfate-chloride exchange. Essential for chondrocyte proliferation, differentiation and cell size expansion. This Equus caballus (Horse) protein is Sulfate transporter (SLC26A2).